The sequence spans 400 residues: Forkhead box protein A4-B (400 aa).

Residues 119-213 constitute a DNA-binding region (fork-head); the sequence is KPPYSYISLI…ENGCYLRRQK (95 aa). Basic and acidic residues predominate over residues 218–234; that stretch reads ERSKSGEGERKGNKPGD. Residues 218 to 290 form a disordered region; that stretch reads ERSKSGEGER…VGFSPTSEQA (73 aa). Polar residues-rich tracts occupy residues 249–258 and 267–277; these read DCSSSRSPQA and STGSSIHQATG.

As to expression, primarily expressed in the dorsal blastopore lip (Spemann organizer) of early gastrulae. At later stages, expressed in the dorsal mesoderm and the neural floor plate. In the dorsal mesoderm, expressed in the notochord but not in the presomitic mesoderm. Also expressed in the mid-brain area.

It is found in the nucleus. In terms of biological role, transcriptional repressor involved in embryonic nervous system development. Plays a role in the induction and patterning of the anterior-posterior neural axis. Involved in the establishment of floor plate differentiation from neural plate cells during gastrulation. Binds the anf1 promoter sequence to restrict expression of anf1 to the anterior of the neural plate, thereby patterning the forebrain. Can bind to the HNF-3-alpha DNA target sequence. Cooperates with t/bra in a dose-dependent manner to specify dorsal mesoderm formation, including notochord. May be involved in the dorso-ventral patterning of the mesoderm. Binds to DNA via the target sequence 5'-[GA]TAAA[TC]A-3', with 5'-GTAAATA-3' being the preferred binding site. The protein is Forkhead box protein A4-B (foxa4-b) of Xenopus laevis (African clawed frog).